Consider the following 165-residue polypeptide: Type 3 secretion system regulator YopR (165 aa).

The segment at 2-11 (TVTLNRGSIT) is 5' secretion signal. A 3' secretion signal region spans residues 131–149 (PYLSELINKELMILLPYNS).

Belongs to the YopR family.

The protein resides in the secreted. In terms of biological role, may be involved in the regulation of the assembly of the type III secretion system (T3SS), also called injectisome, which is used to inject bacterial effector proteins into eukaryotic host cells. May control the secretion and/or polymerization of YscF/SctF, the principal component of the needle filament, thereby impacting the assembly of the T3SS. Involved in pathogenesis. Essential for the establishment of Yersinia infections in a mouse model system. The sequence is that of Type 3 secretion system regulator YopR from Yersinia enterocolitica.